The following is a 647-amino-acid chain: XK-related protein 4 (647 aa).

Over residues 1–15 (MAAKSDGRLKMKKSS) the composition is skewed to basic and acidic residues. The interval 1 to 44 (MAAKSDGRLKMKKSSDVAFTPLQNSDNSGSVQGLAPGLPSGSGA) is disordered. Over residues 21-31 (PLQNSDNSGSV) the composition is skewed to polar residues. 2 consecutive transmembrane segments (helical) span residues 112 to 132 (WILA…WLAV) and 142 to 162 (WFGL…VFSF). Ser197 bears the Phosphoserine mark. The tract at residues 197-238 (SAAGEGEVRPSTPQRQASNASKSNIAATNSGSNSNGATRTSG) is disordered. The segment covering 207 to 236 (STPQRQASNASKSNIAATNSGSNSNGATRT) has biased composition (polar residues). A run of 8 helical transmembrane segments spans residues 245-265 (CSFC…GQIW), 303-323 (HLLA…CIIV), 328-348 (LQAL…WALA), 362-382 (KPIS…TIAA), 393-415 (VFQL…WIVH), 425-445 (WEEI…WFNV), 454-474 (LFIY…LWYL), and 484-504 (FAIP…VFML).

Belongs to the XK family. In terms of assembly, homodimer; homodimerization takes place upon caspase cleavage. Interacts with the processed C-terminus of XRCC4 (protein XRCC4, C-terminus); interaction promotes the phospholipid scramblase activity. Undergoes proteolytic processing by caspase-3 (CASP3), caspase-6 (CASP6) and caspase-7 (CASP7) to generate the XK-related protein 4, processed form, leading to its activation. As to expression, highly expressed in expressed in the brain; weakly expressed in the spleen, thymus, uterus, blood vessels and fetus.

The protein localises to the cell membrane. The enzyme catalyses a 1,2-diacyl-sn-glycero-3-phospho-L-serine(in) = a 1,2-diacyl-sn-glycero-3-phospho-L-serine(out). Phospholipid scramblase activity is activated upon caspase cleavage to generate the XK-related protein 4, processed form. Does not act prior the onset of apoptosis. With respect to regulation, homodimerizes upon caspase cleavage. Phospholipid scramblase activity is activated following interaction with the processed C-terminus of XRCC4 (protein XRCC4, C-terminus). Its function is as follows. Phospholipid scramblase that promotes phosphatidylserine exposure on apoptotic cell surface. Phosphatidylserine is a specific marker only present at the surface of apoptotic cells and acts as a specific signal for engulfment. In Mus musculus (Mouse), this protein is XK-related protein 4.